Reading from the N-terminus, the 142-residue chain is Large ribosomal subunit protein uL24 (142 aa).

Residues 1–11 (MKVNPFVSSDS) show a composition bias toward polar residues. The interval 1–24 (MKVNPFVSSDSGKSRKAHFNAPSH) is disordered.

It belongs to the universal ribosomal protein uL24 family.

This Caenorhabditis elegans protein is Large ribosomal subunit protein uL24 (rpl-26).